Consider the following 775-residue polypeptide: Phenylalanine--tRNA ligase beta subunit (775 aa).

A tRNA-binding domain is found at 39–147 (GIDLDGVVFG…EDFKPGTDAN (109 aa)). The B5 domain occupies 394–470 (YKPKKVFLPQ…RVKGYEHYTS (77 aa)). Residues Asp-448, Asp-454, Glu-457, and Glu-458 each contribute to the Mg(2+) site. Positions 681-774 (AKFPPVVRDI…LKEKYGVELR (94 aa)) constitute an FDX-ACB domain.

Belongs to the phenylalanyl-tRNA synthetase beta subunit family. Type 1 subfamily. Tetramer of two alpha and two beta subunits. Mg(2+) is required as a cofactor.

It localises to the cytoplasm. The enzyme catalyses tRNA(Phe) + L-phenylalanine + ATP = L-phenylalanyl-tRNA(Phe) + AMP + diphosphate + H(+). This is Phenylalanine--tRNA ligase beta subunit (pheT) from Aquifex aeolicus (strain VF5).